A 485-amino-acid polypeptide reads, in one-letter code: Adenosylhomocysteinase 2 (485 aa).

The substrate site is built by T64, D139, and E205. NAD(+) is bound at residue 206–208 (TTT). Residues K235 and D239 each contribute to the substrate site. NAD(+) is bound by residues N240, 269–274 (GYGDVG), E292, N327, 348–350 (IGH), and N397.

It belongs to the adenosylhomocysteinase family. NAD(+) serves as cofactor.

The enzyme catalyses S-adenosyl-L-homocysteine + H2O = L-homocysteine + adenosine. Its pathway is amino-acid biosynthesis; L-homocysteine biosynthesis; L-homocysteine from S-adenosyl-L-homocysteine: step 1/1. Its function is as follows. Adenosylhomocysteine is a competitive inhibitor of S-adenosyl-L-methionine-dependent methyl transferase reactions; therefore adenosylhomocysteinase may play a key role in the control of methylations via regulation of the intracellular concentration of adenosylhomocysteine. The sequence is that of Adenosylhomocysteinase 2 (SAHH2) from Arabidopsis thaliana (Mouse-ear cress).